A 166-amino-acid polypeptide reads, in one-letter code: Anaerobic nitrite reductase NSHB1 (166 aa).

The Globin domain occupies 13-163 (SFSEEQEALV…LVAAIKQEMK (151 aa)). The Homodimerization motif lies at 46-50 (EVAPS). The heme b site is built by serine 56, lysine 70, histidine 74, arginine 104, threonine 108, and histidine 109. Positions 116 to 128 (DAHFEVVKFALLD) match the Homodimerization motif.

It belongs to the plant globin family. Homodimer. Heme b serves as cofactor. Expressed in coleoptiles, embryos, leaves, seminal roots and roots.

The protein resides in the cytoplasm. It localises to the nucleus. It carries out the reaction Fe(III)-heme b-[protein] + nitric oxide + H2O = Fe(II)-heme b-[protein] + nitrite + 2 H(+). Its activity is regulated as follows. Slowly reduced by ascorbic acid (AA); this reaction may become a source of nitric oxide (NO) during hypoxia. Its function is as follows. Phytoglobin that reduces nitrite to nitric oxide under anoxic conditions (e.g. during flooding or in waterlogged soil). May not function as an oxygen storage or transport protein. Has an unusually high affinity for O(2) through a hexacoordinate heme iron because of a very low dissociation constant. This Oryza sativa subsp. japonica (Rice) protein is Anaerobic nitrite reductase NSHB1.